A 397-amino-acid polypeptide reads, in one-letter code: DnaJ homolog subfamily A member 1 (397 aa).

The J domain occupies 6-68 (TYYDVLGVKP…KKRELYDKGG (63 aa)). An N6-acetyllysine modification is found at Lys-66. Position 83 is a phosphoserine (Ser-83). A CR-type zinc finger spans residues 121 to 205 (GATRKLALQK…CNGRKIVREK (85 aa)). Zn(2+) contacts are provided by Cys-134, Cys-137, Cys-150, Cys-153, Cys-177, Cys-180, Cys-193, and Cys-196. CXXCXGXG motif repeat units follow at residues 134–141 (CDKCEGRG), 150–157 (CPNCRGTG), 177–184 (CMECQGHG), and 193–200 (CKSCNGRK). A Phosphoserine modification is found at Ser-335. The interval 352–397 (VEETDEMDQVELVDFDPNQERRRHYNGEAYEDDEHHPRGGVQCQTS) is disordered. The span at 353–365 (EETDEMDQVELVD) shows a compositional bias: acidic residues. A Phosphotyrosine modification is found at Tyr-381. Cys-394 is subject to Cysteine methyl ester. A lipid anchor (S-farnesyl cysteine) is attached at Cys-394. Positions 395–397 (QTS) are cleaved as a propeptide — removed in mature form.

Identified in a complex with HSPA1B and BAX. Interacts with RNF207.

It is found in the membrane. The protein resides in the cytoplasm. Its subcellular location is the microsome. It localises to the mitochondrion. The protein localises to the nucleus. It is found in the perinuclear region. Functionally, co-chaperone for HSPA8/Hsc70. Plays a role in protein transport into mitochondria via its role as co-chaperone. Functions as co-chaperone for HSPA1B and negatively regulates the translocation of BAX from the cytosol to mitochondria in response to cellular stress, thereby protecting cells against apoptosis. Stimulates ATP hydrolysis, but not the folding of unfolded proteins mediated by HSPA1A (in vitro). Promotes apoptosis in response to cellular stress mediated by exposure to anisomycin or UV. This Bos taurus (Bovine) protein is DnaJ homolog subfamily A member 1 (DNAJA1).